A 192-amino-acid chain; its full sequence is Orotate phosphoribosyltransferase (192 aa).

5-phospho-alpha-D-ribose 1-diphosphate is bound by residues Arg-102, Lys-103, Lys-106, and Glu-129–Ser-137. Thr-133 and Arg-161 together coordinate orotate.

The protein belongs to the purine/pyrimidine phosphoribosyltransferase family. PyrE subfamily. As to quaternary structure, homodimer. The cofactor is Mg(2+).

It carries out the reaction orotidine 5'-phosphate + diphosphate = orotate + 5-phospho-alpha-D-ribose 1-diphosphate. The protein operates within pyrimidine metabolism; UMP biosynthesis via de novo pathway; UMP from orotate: step 1/2. Functionally, catalyzes the transfer of a ribosyl phosphate group from 5-phosphoribose 1-diphosphate to orotate, leading to the formation of orotidine monophosphate (OMP). This Prochlorococcus marinus (strain SARG / CCMP1375 / SS120) protein is Orotate phosphoribosyltransferase.